The following is an 87-amino-acid chain: Glutaredoxin 1 (87 aa).

Positions 1–87 (MFTVIFGRPG…WAKENLNLFA (87 aa)) constitute a Glutaredoxin domain. A disulfide bridge connects residues C11 and C14.

Belongs to the glutaredoxin family. In terms of assembly, monomer.

In terms of biological role, the disulfide bond functions as an electron carrier in the glutathione-dependent synthesis of deoxyribonucleotides by the enzyme ribonucleotide reductase. In addition, it is also involved in reducing some disulfides in a coupled system with glutathione reductase. The chain is Glutaredoxin 1 (grxA) from Salmonella typhi.